Consider the following 337-residue polypeptide: Fructose-1,6-bisphosphatase class 1 (337 aa).

Glutamate 89, aspartate 112, leucine 114, and aspartate 115 together coordinate Mg(2+). Substrate-binding positions include 115-118, asparagine 208, tyrosine 241, and lysine 271; that span reads DGSS. Mg(2+) is bound at residue glutamate 277.

This sequence belongs to the FBPase class 1 family. Homotetramer. Requires Mg(2+) as cofactor.

The protein resides in the cytoplasm. The enzyme catalyses beta-D-fructose 1,6-bisphosphate + H2O = beta-D-fructose 6-phosphate + phosphate. Its pathway is carbohydrate biosynthesis; gluconeogenesis. The sequence is that of Fructose-1,6-bisphosphatase class 1 from Yersinia pestis bv. Antiqua (strain Antiqua).